The primary structure comprises 92 residues: Small ribosomal subunit protein uS19 (92 aa).

This sequence belongs to the universal ribosomal protein uS19 family.

Functionally, protein S19 forms a complex with S13 that binds strongly to the 16S ribosomal RNA. This is Small ribosomal subunit protein uS19 from Lactococcus lactis subsp. lactis (strain IL1403) (Streptococcus lactis).